Consider the following 521-residue polypeptide: Ribonuclease Y (521 aa).

A helical membrane pass occupies residues 5–25 (LLLILTAVIMLIVGFAVGAIL). Residues 77-107 (ELKDRRGEVQKQENRLIQREETMDRKDATLD) are disordered. One can recognise a KH domain in the interval 211–271 (TVTVVTLPND…IRREIARMTL (61 aa)). In terms of domain architecture, HD spans 337–430 (VLNHSIEVAK…VAASDAISAA (94 aa)).

The protein belongs to the RNase Y family.

The protein resides in the cell membrane. Functionally, endoribonuclease that initiates mRNA decay. The sequence is that of Ribonuclease Y from Latilactobacillus sakei subsp. sakei (strain 23K) (Lactobacillus sakei subsp. sakei).